Here is a 107-residue protein sequence, read N- to C-terminus: Phosphoribosyl-ATP pyrophosphatase (107 aa).

Belongs to the PRA-PH family.

The protein localises to the cytoplasm. The catalysed reaction is 1-(5-phospho-beta-D-ribosyl)-ATP + H2O = 1-(5-phospho-beta-D-ribosyl)-5'-AMP + diphosphate + H(+). The protein operates within amino-acid biosynthesis; L-histidine biosynthesis; L-histidine from 5-phospho-alpha-D-ribose 1-diphosphate: step 2/9. This chain is Phosphoribosyl-ATP pyrophosphatase, found in Brucella abortus (strain S19).